A 118-amino-acid chain; its full sequence is Large ribosomal subunit protein uL18 (118 aa).

It belongs to the universal ribosomal protein uL18 family. Part of the 50S ribosomal subunit; part of the 5S rRNA/L5/L18/L25 subcomplex. Contacts the 5S and 23S rRNAs.

Functionally, this is one of the proteins that bind and probably mediate the attachment of the 5S RNA into the large ribosomal subunit, where it forms part of the central protuberance. The sequence is that of Large ribosomal subunit protein uL18 from Rhizorhabdus wittichii (strain DSM 6014 / CCUG 31198 / JCM 15750 / NBRC 105917 / EY 4224 / RW1) (Sphingomonas wittichii).